We begin with the raw amino-acid sequence, 249 residues long: 3-deoxy-manno-octulosonate cytidylyltransferase (249 aa).

Belongs to the KdsB family.

Its subcellular location is the cytoplasm. The enzyme catalyses 3-deoxy-alpha-D-manno-oct-2-ulosonate + CTP = CMP-3-deoxy-beta-D-manno-octulosonate + diphosphate. It participates in nucleotide-sugar biosynthesis; CMP-3-deoxy-D-manno-octulosonate biosynthesis; CMP-3-deoxy-D-manno-octulosonate from 3-deoxy-D-manno-octulosonate and CTP: step 1/1. It functions in the pathway bacterial outer membrane biogenesis; lipopolysaccharide biosynthesis. Functionally, activates KDO (a required 8-carbon sugar) for incorporation into bacterial lipopolysaccharide in Gram-negative bacteria. The sequence is that of 3-deoxy-manno-octulosonate cytidylyltransferase from Brucella anthropi (strain ATCC 49188 / DSM 6882 / CCUG 24695 / JCM 21032 / LMG 3331 / NBRC 15819 / NCTC 12168 / Alc 37) (Ochrobactrum anthropi).